Consider the following 145-residue polypeptide: Arginine repressor (145 aa).

The protein belongs to the ArgR family.

The protein localises to the cytoplasm. It functions in the pathway amino-acid biosynthesis; L-arginine biosynthesis [regulation]. Its function is as follows. Regulates arginine biosynthesis genes. The polypeptide is Arginine repressor (Streptococcus equi subsp. zooepidemicus (strain H70)).